Here is a 388-residue protein sequence, read N- to C-terminus: Mannitol-1-phosphate 5-dehydrogenase (388 aa).

Position 5-16 (5-16) interacts with NAD(+); it reads AIQFGGGNIGRG. Lys213 is a catalytic residue.

Belongs to the mannitol dehydrogenase family. As to quaternary structure, monomer.

The enzyme catalyses D-mannitol 1-phosphate + NAD(+) = beta-D-fructose 6-phosphate + NADH + H(+). In terms of biological role, catalyzes the NAD(H)-dependent interconversion of D-fructose 6-phosphate and D-mannitol 1-phosphate in the mannitol metabolic pathway. The polypeptide is Mannitol-1-phosphate 5-dehydrogenase (mpdA) (Neosartorya fischeri (strain ATCC 1020 / DSM 3700 / CBS 544.65 / FGSC A1164 / JCM 1740 / NRRL 181 / WB 181) (Aspergillus fischerianus)).